The sequence spans 167 residues: 3-isopropylmalate dehydratase small subunit (167 aa).

It belongs to the LeuD family. LeuD type 2 subfamily. As to quaternary structure, heterodimer of LeuC and LeuD.

The catalysed reaction is (2R,3S)-3-isopropylmalate = (2S)-2-isopropylmalate. It functions in the pathway amino-acid biosynthesis; L-leucine biosynthesis; L-leucine from 3-methyl-2-oxobutanoate: step 2/4. In terms of biological role, catalyzes the isomerization between 2-isopropylmalate and 3-isopropylmalate, via the formation of 2-isopropylmaleate. The protein is 3-isopropylmalate dehydratase small subunit of Sulfurimonas denitrificans (strain ATCC 33889 / DSM 1251) (Thiomicrospira denitrificans (strain ATCC 33889 / DSM 1251)).